A 441-amino-acid chain; its full sequence is Transcription factor bHLH90 (441 aa).

Residues 260 to 309 (NFKSKNLHSERKRRERINQAMYGLRAVVPKITKLNKIGIFSDAVDYINEL) enclose the bHLH domain.

As to quaternary structure, homodimer. Expressed constitutively in roots, leaves, stems, and flowers.

Its subcellular location is the nucleus. This Arabidopsis thaliana (Mouse-ear cress) protein is Transcription factor bHLH90 (BHLH90).